The following is a 231-amino-acid chain: Large ribosomal subunit protein uL1 (231 aa).

The protein belongs to the universal ribosomal protein uL1 family. In terms of assembly, part of the 50S ribosomal subunit.

Functionally, binds directly to 23S rRNA. The L1 stalk is quite mobile in the ribosome, and is involved in E site tRNA release. Protein L1 is also a translational repressor protein, it controls the translation of the L11 operon by binding to its mRNA. The protein is Large ribosomal subunit protein uL1 of Dechloromonas aromatica (strain RCB).